We begin with the raw amino-acid sequence, 332 residues long: Ferredoxin--NADP reductase 2 (332 aa).

7 residues coordinate FAD: E37, Q45, Y50, V90, F124, D285, and T326.

This sequence belongs to the ferredoxin--NADP reductase type 2 family. As to quaternary structure, homodimer. Requires FAD as cofactor.

The catalysed reaction is 2 reduced [2Fe-2S]-[ferredoxin] + NADP(+) + H(+) = 2 oxidized [2Fe-2S]-[ferredoxin] + NADPH. The chain is Ferredoxin--NADP reductase 2 (yumC) from Bacillus subtilis (strain 168).